Reading from the N-terminus, the 261-residue chain is Src-like-adapter 2 (261 aa).

Residues 1–10 (MGSLPSRRKS) show a composition bias toward basic residues. The tract at residues 1–31 (MGSLPSRRKSLPSPSLSSSVQGQGPVTMEAE) is disordered. G2 carries N-myristoyl glycine lipidation. Residues 32 to 92 (RSKATAVALG…PSVHVAKVSH (61 aa)) enclose the SH3 domain. Residues 94-191 (WLYEGLSREK…DICCLLKEPC (98 aa)) enclose the SH2 domain. Positions 195–261 (RAGPLPGKDI…NDEAVSLDDA (67 aa)) are SLA C-terminal.

Interacts (via SH2 domain) with ZAP70 (phosphorylated) and CD3Z (phosphorylated). Interacts (via SH2 domain) with CSF1R (phosphorylated). Interacts (via its C-terminal domain) with CBL (phosphorylated). In terms of processing, phosphorylated by CSF1R. In terms of tissue distribution, predominantly expressed in immune system, with highest levels in peripheral blood leukocytes. Expressed in spleen, thymus and lymph nodes. Expressed in T-cells as well as in monocytes, and at low level in B-cells. Also detected in placenta, prostate, skin, retina and colon.

The protein resides in the cytoplasm. It is found in the cell membrane. It localises to the cytoplasmic vesicle. Its function is as follows. Adapter protein, which negatively regulates T-cell receptor (TCR) signaling. Inhibits T-cell antigen-receptor induced activation of nuclear factor of activated T-cells. May act by linking signaling proteins such as ZAP70 with CBL, leading to a CBL dependent degradation of signaling proteins. The sequence is that of Src-like-adapter 2 (SLA2) from Homo sapiens (Human).